A 691-amino-acid chain; its full sequence is Elongation factor G (691 aa).

One can recognise a tr-type G domain in the interval 8-282 (EQTRNIGIMA…AVIDYLPAPT (275 aa)). GTP contacts are provided by residues 17 to 24 (AHIDAGKT), 81 to 85 (DTPGH), and 135 to 138 (NKMD).

Belongs to the TRAFAC class translation factor GTPase superfamily. Classic translation factor GTPase family. EF-G/EF-2 subfamily.

It is found in the cytoplasm. Functionally, catalyzes the GTP-dependent ribosomal translocation step during translation elongation. During this step, the ribosome changes from the pre-translocational (PRE) to the post-translocational (POST) state as the newly formed A-site-bound peptidyl-tRNA and P-site-bound deacylated tRNA move to the P and E sites, respectively. Catalyzes the coordinated movement of the two tRNA molecules, the mRNA and conformational changes in the ribosome. The protein is Elongation factor G of Natranaerobius thermophilus (strain ATCC BAA-1301 / DSM 18059 / JW/NM-WN-LF).